The following is a 1057-amino-acid chain: Diacylglycerol kinase iota (1057 aa).

The segment covering 15–59 has biased composition (low complexity); that stretch reads AARGPARAPAAAAAAAASPPGPCSGAACAPSAAAGAGAMNPSSSA. 2 disordered regions span residues 15-74 and 334-358; these read AARG…SSGS and LKASNRKKKRTSFKRKASKRGMEQE. The span at 337–352 shows a compositional bias: basic residues; it reads SNRKKKRTSFKRKASK. Positions 372-507 constitute a DAGKc domain; that stretch reads PLMKPLLVFV…DRWNLHVERN (136 aa). ANK repeat units follow at residues 950 to 979 and 986 to 1015; these read DHCSLLHYAAKTGNGEIVKYILDHGPSELL and TGETALHKAACQRNRAVCQLLVDAGASLRK. Basic and acidic residues predominate over residues 1014–1024; it reads RKTDSKGKTPQ. Positions 1014-1033 are disordered; it reads RKTDSKGKTPQERAQQAGDP. The PDZ-binding motif lies at 1055–1057; it reads TAV.

It belongs to the eukaryotic diacylglycerol kinase family. As to quaternary structure, interacts (via PDZ-binding motif) with DLG4; controls the localization of DGKI to the synapse. Interacts (via PDZ-binding motif) with DLG1. Interacts (via PDZ-binding motif) with DLG2. Interacts (via PDZ-binding motif) with DLG3. May interact with RASGRP3; involved in the regulation of RASGRP3 activity. As to expression, specifically expressed in brain and retina. In brain, highly expressed in hippocampus, caudate nucleus, occipital pole, cerebral cortex, and cerebellum. Also detected in kidney.

It is found in the cell projection. The protein resides in the axon. Its subcellular location is the dendrite. The protein localises to the presynapse. It localises to the postsynapse. It is found in the postsynaptic density. The protein resides in the synaptic cell membrane. Its subcellular location is the cytoplasmic vesicle. The protein localises to the secretory vesicle. It localises to the synaptic vesicle membrane. It is found in the cytoplasm. The protein resides in the cytosol. Its subcellular location is the nucleus. It catalyses the reaction a 1,2-diacyl-sn-glycerol + ATP = a 1,2-diacyl-sn-glycero-3-phosphate + ADP + H(+). The enzyme catalyses 1,2-di-(9Z-octadecenoyl)-sn-glycerol + ATP = 1,2-di-(9Z-octadecenoyl)-sn-glycero-3-phosphate + ADP + H(+). It carries out the reaction 1-octadecanoyl-2-(5Z,8Z,11Z,14Z-eicosatetraenoyl)-sn-glycerol + ATP = 1-octadecanoyl-2-(5Z,8Z,11Z,14Z-eicosatetraenoyl)-sn-glycero-3-phosphate + ADP + H(+). The catalysed reaction is 1-octadecanoyl-2-(9Z,12Z)-octadecadienoyl-sn-glycerol + ATP = 1-octadecanoyl-2-(9Z,12Z-octadecadienoyl)-sn-glycero-3-phosphate + ADP + H(+). It participates in lipid metabolism; glycerolipid metabolism. In terms of biological role, diacylglycerol kinase that converts diacylglycerol/DAG into phosphatidic acid/phosphatidate/PA and regulates the respective levels of these two bioactive lipids. Thereby, acts as a central switch between the signaling pathways activated by these second messengers with different cellular targets and opposite effects in numerous biological processes. Has probably no preference for any of the diacylglycerols in terms of the acyl chain composition, especially for the acyl chain at the sn-2 position. By controlling the diacylglycerol/DAG-mediated activation of RASGRP3, negatively regulates the Rap1 signaling pathway. May play a role in presynaptic diacylglycerol/DAG signaling and control neurotransmitter release during metabotropic glutamate receptor-dependent long-term depression. This is Diacylglycerol kinase iota from Homo sapiens (Human).